A 97-amino-acid chain; its full sequence is uncharacterized protein (97 aa).

Positions 1–21 (MLLHGLGRMNIIFICFPSLAC) are cleaved as a signal peptide.

This is an uncharacterized protein from Schizosaccharomyces pombe (strain 972 / ATCC 24843) (Fission yeast).